The sequence spans 1406 residues: Protein FAM135B (1406 aa).

2 disordered regions span residues 519 to 548 and 770 to 820; these read WTGQTSDAGTYPVADVDTSRRSPGPEDGQA and SVSA…GDSG. S777 and S778 each carry phosphoserine. Residues 804-816 are compositionally biased toward polar residues; the sequence is KSQGSPGSCSQLC.

This sequence belongs to the FAM135 family.

This chain is Protein FAM135B (FAM135B), found in Homo sapiens (Human).